A 339-amino-acid polypeptide reads, in one-letter code: Phenylalanine--tRNA ligase alpha subunit (339 aa).

E254 contacts Mg(2+).

The protein belongs to the class-II aminoacyl-tRNA synthetase family. Phe-tRNA synthetase alpha subunit type 1 subfamily. In terms of assembly, tetramer of two alpha and two beta subunits. The cofactor is Mg(2+).

The protein resides in the cytoplasm. It catalyses the reaction tRNA(Phe) + L-phenylalanine + ATP = L-phenylalanyl-tRNA(Phe) + AMP + diphosphate + H(+). The polypeptide is Phenylalanine--tRNA ligase alpha subunit (Dictyoglomus thermophilum (strain ATCC 35947 / DSM 3960 / H-6-12)).